The primary structure comprises 526 residues: Sugar transport protein 13 (526 aa).

Over 1–18 the chain is Cytoplasmic; sequence MTGGGFATSANGVEFEAK. A helical transmembrane segment spans residues 19–39; it reads ITPIVIISCIMAATGGLMFGY. Residues 40-81 lie on the Extracellular side of the membrane; sequence DVGVSGGVTSMPDFLEKFFPVVYRKVVAGADKDSNYCKYDNQ. The chain crosses the membrane as a helical span at residues 82-102; the sequence is GLQLFTSSLYLAGLTATFFAS. Over 103-111 the chain is Cytoplasmic; the sequence is YTTRTLGRR. Residues 112–132 traverse the membrane as a helical segment; the sequence is LTMLIAGVFFIIGVALNAGAQ. Residues 133–141 are Extracellular-facing; it reads DLAMLIAGR. Residues 142-162 traverse the membrane as a helical segment; that stretch reads ILLGCGVGFANQAVPLFLSEI. Residues 163 to 168 are Cytoplasmic-facing; sequence APTRIR. Residues 169–189 traverse the membrane as a helical segment; that stretch reads GGLNILFQLNVTIGILFANLV. Topologically, residues 190–203 are extracellular; that stretch reads NYGTAKIKGGWGWR. A helical membrane pass occupies residues 204 to 224; the sequence is LSLGLAGIPALLLTVGALLVT. At 225 to 296 the chain is on the cytoplasmic side; it reads ETPNSLVERG…IAVALQIFQQ (72 aa). Residues 297-317 form a helical membrane-spanning segment; the sequence is CTGINAIMFYAPVLFSTLGFG. The Extracellular segment spans residues 318–319; the sequence is SD. The chain crosses the membrane as a helical span at residues 320–340; it reads ASLYSAVVTGAVNVLSTLVSI. At 341–349 the chain is on the cytoplasmic side; the sequence is YSVDKVGRR. A helical transmembrane segment spans residues 350–370; it reads VLLLEAGVQMFFSQVVIAIIL. Over 371–383 the chain is Extracellular; sequence GVKVTDTSTNLSK. The helical transmembrane segment at 384–404 threads the bilayer; it reads GFAILVVVMICTYVAAFAWSW. The Cytoplasmic segment spans residues 405-426; that stretch reads GPLGWLIPSETFPLETRSAGQS. Residues 427–447 traverse the membrane as a helical segment; it reads VTVCVNLLFTFIIAQAFLSML. Residues 448–451 lie on the Extracellular side of the membrane; it reads CHFK. A helical transmembrane segment spans residues 452 to 472; the sequence is FGIFIFFSAWVLIMSVFVMFL. Residues 473 to 526 lie on the Cytoplasmic side of the membrane; it reads LPETKNIPIEEMTERVWKKHWFWARFMDDHNDHEFVNGEKSNGKSNGFDPSTRL.

The protein belongs to the major facilitator superfamily. Sugar transporter (TC 2.A.1.1) family.

It is found in the cell membrane. Mediates an active uptake of hexoses, probably by sugar/hydrogen symport. In Arabidopsis thaliana (Mouse-ear cress), this protein is Sugar transport protein 13 (STP13).